The following is a 123-amino-acid chain: Large ribosomal subunit protein uL18 (123 aa).

The protein belongs to the universal ribosomal protein uL18 family. As to quaternary structure, part of the 50S ribosomal subunit; part of the 5S rRNA/L5/L18/L25 subcomplex. Contacts the 5S and 23S rRNAs.

Functionally, this is one of the proteins that bind and probably mediate the attachment of the 5S RNA into the large ribosomal subunit, where it forms part of the central protuberance. This is Large ribosomal subunit protein uL18 from Wolbachia pipientis wMel.